A 180-amino-acid chain; its full sequence is Cytokinin-beta-glucosidase 2 (180 aa).

Hydrolyzes cytokinin glucosides thus liberating free cytokinins. This Panax ginseng (Korean ginseng) protein is Cytokinin-beta-glucosidase 2 (ROLC2).